Here is a 194-residue protein sequence, read N- to C-terminus: HTH-type nicotine-responsive transcriptional repressor HdnoR (194 aa).

Residues 6–66 enclose the HTH tetR-type domain; that stretch reads VDRRQQLIDA…AAAAELLQQL (61 aa). Positions 29 to 48 form a DNA-binding region, H-T-H motif; sequence SLRTIASEAKASLAAVHVCF.

Homodimer.

6-hydroxy-D-nicotine and 6-hydroxy-L-nicotine prevent HdnoR from binding to the IR1 DNA. Both 6-hydroxy-nicotine enantiomers prevent DNA-protein complex formation at micromolar concentrations, with the D-enantiomer being twice as potent as the L-enantiomer. A thousand-fold higher L-nicotine concentration is required to elicit a similar effect. Represses expression of the 6-hydroxy-D-nicotine oxidase (6-hdno). Acts by binding to a gene operator site consisting of two inverted repeats, IR1 (covering the 6-hdno promoter region) and IR2 (situated upstream from the 6-hdno promoter). Binding to one site may stimulate binding of the protein to the second site. In Paenarthrobacter nicotinovorans (Arthrobacter nicotinovorans), this protein is HTH-type nicotine-responsive transcriptional repressor HdnoR.